The primary structure comprises 102 residues: Large ribosomal subunit protein bL21 (102 aa).

The protein belongs to the bacterial ribosomal protein bL21 family. Part of the 50S ribosomal subunit. Contacts protein L20.

This protein binds to 23S rRNA in the presence of protein L20. This is Large ribosomal subunit protein bL21 from Bifidobacterium animalis subsp. lactis (strain AD011).